The following is a 438-amino-acid chain: Thymidine phosphorylase (438 aa).

Belongs to the thymidine/pyrimidine-nucleoside phosphorylase family. As to quaternary structure, homodimer.

The catalysed reaction is thymidine + phosphate = 2-deoxy-alpha-D-ribose 1-phosphate + thymine. It functions in the pathway pyrimidine metabolism; dTMP biosynthesis via salvage pathway; dTMP from thymine: step 1/2. In terms of biological role, the enzymes which catalyze the reversible phosphorolysis of pyrimidine nucleosides are involved in the degradation of these compounds and in their utilization as carbon and energy sources, or in the rescue of pyrimidine bases for nucleotide synthesis. The polypeptide is Thymidine phosphorylase (Burkholderia lata (strain ATCC 17760 / DSM 23089 / LMG 22485 / NCIMB 9086 / R18194 / 383)).